We begin with the raw amino-acid sequence, 765 residues long: DNA topoisomerase 1 (765 aa).

Residues 1–23 (MSGDHLHNDSQIEADFRLNDSHK) show a composition bias toward basic and acidic residues. The segment at 1-199 (MSGDHLHNDS…NKKKKPKKEE (199 aa)) is disordered. S2 carries the N-acetylserine modification. Residues S2 and S10 each carry the phosphoserine modification. The span at 24–39 (HKDKHKDREHRHKEHK) shows a compositional bias: basic residues. Over residues 40-108 (KEKDREKSKH…DAKIKKEKEN (69 aa)) the composition is skewed to basic and acidic residues. S57 is modified (phosphoserine). A Glycyl lysine isopeptide (Lys-Gly) (interchain with G-Cter in SUMO2) cross-link involves residue K101. K103 is covalently cross-linked (Glycyl lysine isopeptide (Lys-Gly) (interchain with G-Cter in SUMO); alternate). Residue K103 forms a Glycyl lysine isopeptide (Lys-Gly) (interchain with G-Cter in SUMO2); alternate linkage. Position 112 is a phosphoserine (S112). K117 participates in a covalent cross-link: Glycyl lysine isopeptide (Lys-Gly) (interchain with G-Cter in SUMO); alternate. K117 is covalently cross-linked (Glycyl lysine isopeptide (Lys-Gly) (interchain with G-Cter in SUMO2); alternate). K117 is covalently cross-linked (Glycyl lysine isopeptide (Lys-Gly) (interchain with G-Cter in SUMO1); alternate). The span at 129–166 (PKEDIKPLKRPRDEDDADYKPKKIKTEDTKKEKKRKLE) shows a compositional bias: basic and acidic residues. Residues K134 and K148 each participate in a glycyl lysine isopeptide (Lys-Gly) (interchain with G-Cter in SUMO2) cross-link. K153 is covalently cross-linked (Glycyl lysine isopeptide (Lys-Gly) (interchain with G-Cter in SUMO); alternate). K153 participates in a covalent cross-link: Glycyl lysine isopeptide (Lys-Gly) (interchain with G-Cter in SUMO2); alternate. Residues K158 and K164 each participate in a glycyl lysine isopeptide (Lys-Gly) (interchain with G-Cter in SUMO2) cross-link. K172 participates in a covalent cross-link: Glycyl lysine isopeptide (Lys-Gly) (interchain with G-Cter in SUMO2); alternate. The residue at position 172 (K172) is an N6-acetyllysine; alternate. Over residues 179-199 (KDKDKKVPEPDNKKKKPKKEE) the composition is skewed to basic and acidic residues. Residue K204 forms a Glycyl lysine isopeptide (Lys-Gly) (interchain with G-Cter in SUMO2) linkage. K280 is subject to N6-acetyllysine. Residue K336 forms a Glycyl lysine isopeptide (Lys-Gly) (interchain with G-Cter in SUMO2) linkage. Interaction with DNA stretches follow at residues 425–426 (KY) and 488–493 (RAGNEK). Positions 432–765 (SSRIKGEKDW…IDMADEDYEF (334 aa)) constitute a Topo IB-type catalytic domain. S506 is subject to Phosphoserine; by CK2. K549 participates in a covalent cross-link: Glycyl lysine isopeptide (Lys-Gly) (interchain with G-Cter in SUMO2). The interaction with DNA stretch occupies residues 585 to 587 (TAK). Glycyl lysine isopeptide (Lys-Gly) (interchain with G-Cter in SUMO2) cross-links involve residues K642, K700, and K712. The active-site O-(3'-phospho-DNA)-tyrosine intermediate is the Y723.

Belongs to the type IB topoisomerase family. In terms of assembly, monomer. Interacts with ERCC6. Interacts with TPRN; TPRN interacts with a number of DNA damage response proteins, is recruited to sites of DNA damage and may play a role in DNA damage repair. (Microbial infection) Interacts with SV40 Large T antigen; this interactions allows viral DNA replication. Post-translationally, sumoylated. Lys-117 is the main site of sumoylation. Sumoylation plays a role in partitioning TOP1 between nucleoli and nucleoplasm. Levels are dramatically increased on camptothecin (CPT) treatment. In terms of processing, phosphorylation at Ser-506 by CK2 increases binding to supercoiled DNA and sensitivity to camptothecin. In terms of tissue distribution, endothelial cells.

It is found in the nucleus. It localises to the nucleolus. The protein localises to the nucleoplasm. It catalyses the reaction ATP-independent breakage of single-stranded DNA, followed by passage and rejoining.. Its activity is regulated as follows. Specifically inhibited by camptothecin (CPT), a plant alkaloid with antitumor activity. In terms of biological role, releases the supercoiling and torsional tension of DNA introduced during the DNA replication and transcription by transiently cleaving and rejoining one strand of the DNA duplex. Introduces a single-strand break via transesterification at a target site in duplex DNA. The scissile phosphodiester is attacked by the catalytic tyrosine of the enzyme, resulting in the formation of a DNA-(3'-phosphotyrosyl)-enzyme intermediate and the expulsion of a 5'-OH DNA strand. The free DNA strand then rotates around the intact phosphodiester bond on the opposing strand, thus removing DNA supercoils. Finally, in the religation step, the DNA 5'-OH attacks the covalent intermediate to expel the active-site tyrosine and restore the DNA phosphodiester backbone. Regulates the alternative splicing of tissue factor (F3) pre-mRNA in endothelial cells. Involved in the circadian transcription of the core circadian clock component BMAL1 by altering the chromatin structure around the ROR response elements (ROREs) on the BMAL1 promoter. In Homo sapiens (Human), this protein is DNA topoisomerase 1 (TOP1).